The following is a 270-amino-acid chain: Cyclohexanol dehydrogenase (270 aa).

Residues Arg19, Asp40, Asp78, Val79, Asn105, Tyr176, Lys180, Ile209, and Thr211 each coordinate NAD(+). The Proton acceptor role is filled by Tyr176.

Belongs to the short-chain dehydrogenases/reductases (SDR) family. Homodimer.

Its subcellular location is the cytoplasm. The catalysed reaction is cyclohexanol + NAD(+) = cyclohexanone + NADH + H(+). With respect to regulation, activity is enhanced by the addition of Ba(2+) and Mg(2+), but inhibited by the addition of Al(3+), Ca(2+), Co(2+), Cu(2+), Mn(2+) and Zn(2+). Its function is as follows. Catalyzes the oxidation of cyclohexanol to cyclohexanone. Can also use a broad range of other alcohols, including trans-cyclohexane-1,2-diol, trans-cyclopentane-1,2-diol, cyclopentanol, hexane-1,2-diol, ethanol, 1-propanol, 1-butanol, 1-pentanol and 1-hexanol. This chain is Cyclohexanol dehydrogenase, found in Rhodococcus sp. (strain TK6).